The sequence spans 459 residues: Diaminopimelate decarboxylase (459 aa).

Lys-89 carries the N6-(pyridoxal phosphate)lysine modification. Residues Gly-271 and 313–316 (EPGR) contribute to the pyridoxal 5'-phosphate site. 3 residues coordinate substrate: Arg-316, Arg-357, and Tyr-361. Cys-388 (proton donor) is an active-site residue. 2 residues coordinate substrate: Glu-389 and Tyr-418. A pyridoxal 5'-phosphate-binding site is contributed by Tyr-418.

It belongs to the Orn/Lys/Arg decarboxylase class-II family. LysA subfamily. Homodimer. Requires pyridoxal 5'-phosphate as cofactor.

The catalysed reaction is meso-2,6-diaminopimelate + H(+) = L-lysine + CO2. Its pathway is amino-acid biosynthesis; L-lysine biosynthesis via DAP pathway; L-lysine from DL-2,6-diaminopimelate: step 1/1. Functionally, specifically catalyzes the decarboxylation of meso-diaminopimelate (meso-DAP) to L-lysine. The polypeptide is Diaminopimelate decarboxylase (Corynebacterium efficiens (strain DSM 44549 / YS-314 / AJ 12310 / JCM 11189 / NBRC 100395)).